The following is a 386-amino-acid chain: Glucose-1-phosphate adenylyltransferase (386 aa).

Residues Tyr-100, Gly-165, 180–181 (EK), and Ser-191 each bind alpha-D-glucose 1-phosphate.

It belongs to the bacterial/plant glucose-1-phosphate adenylyltransferase family. As to quaternary structure, homotetramer.

It carries out the reaction alpha-D-glucose 1-phosphate + ATP + H(+) = ADP-alpha-D-glucose + diphosphate. It participates in glycan biosynthesis; glycogen biosynthesis. Its function is as follows. Involved in the biosynthesis of ADP-glucose, a building block required for the elongation reactions to produce glycogen. Catalyzes the reaction between ATP and alpha-D-glucose 1-phosphate (G1P) to produce pyrophosphate and ADP-Glc. The chain is Glucose-1-phosphate adenylyltransferase from Clostridium botulinum (strain Eklund 17B / Type B).